Reading from the N-terminus, the 924-residue chain is MAEVSMGSSSSSTDLSPEEERVFIRDIAIAAEANSKEGDTFYLITQRWWQEWIEYVNQDQPCNTNDGSSLSEHCDSPGSSTLKKPSRIDNSDLIYDSSLEDPSNTSEIIETLQEGRDYVLLPQEVWNQLRSWYGGGPTLARRVISSGLSQTELAVEVYPLRLQLLLMPKSDHSAIRISKKETIRELHRRACEIFDLDSEHVRIWDYYGHQKYSLMNDLDKTLDDANLQMDQDILVEVLDINGTLSSAHIQSAQENGLVDGDSTSILIEPSKSSLAAAGGFSSSRNAFRTGSVEVSQSFDNTYSSTGVTTRGSTAGLTGLLNLGNTCFMNSAIQCLVHTPEFASYFQEDYHQEINWQNPLGMVGELALAFGDLLRKLWAPGRTPIAPRPFKAKLARFAPQFSGYNQHDSQELLAFLLDGLHEDLNRVKHKPYINSRDADGRPDEEVADEFWKNHIARNDSIIVDVCQGQYKSTLVCPICNKVSVTFDPFMYLSLPLQFNTTRAITVTVFSCDKTALPSTITVNVSKQGRCRDLIQALTNACSLKQSEELKLAEIRNNFIHRLFEDPLIPLSSIKDDDHLAAYKLSKSSENTTLLRLVLRRRDQKAGERESTVQLKPCGTPLLSSASCGDALTKGKIHCLVQNMLSPFRREESVGKKGNSDSSIPERRSARFNNTEEEDKVGGLKKAKKSNSSDLGASKLSLQLIDEDNKTINLPDNEAEAMKLPSSATVTIYLDWTPELSGMYDITCLESLPEVLKYGPTTKKARSEPLSLYACLEAFLREEPLVPDEMWFCPQCNERRQASKKLDLWRLPEVLVIHLKRFSYSRSMKHKLETFVNFPIHDLDLTKYVANKNLSQPQLYELYALTNHYGGMGSGHYTAHIKLLDDSRWYNFDDSHISHINEDDVKSGAAYVLFYRRKSDAGGKMT.

One can recognise a DUSP domain in the interval 15–145 (LSPEEERVFI…GPTLARRVIS (131 aa)). The span at 64-83 (TNDGSSLSEHCDSPGSSTLK) shows a compositional bias: polar residues. The disordered stretch occupies residues 64-87 (TNDGSSLSEHCDSPGSSTLKKPSR). The region spanning 317-916 (TGLLNLGNTC…AAYVLFYRRK (600 aa)) is the USP domain. The Nucleophile role is filled by cysteine 326. Positions 648-667 (REESVGKKGNSDSSIPERRS) are enriched in basic and acidic residues. Residues 648–690 (REESVGKKGNSDSSIPERRSARFNNTEEEDKVGGLKKAKKSNS) form a disordered region. The Proton acceptor role is filled by histidine 874.

Belongs to the peptidase C19 family.

The catalysed reaction is Thiol-dependent hydrolysis of ester, thioester, amide, peptide and isopeptide bonds formed by the C-terminal Gly of ubiquitin (a 76-residue protein attached to proteins as an intracellular targeting signal).. Functionally, recognizes and hydrolyzes the peptide bond at the C-terminal Gly of ubiquitin. Involved in the processing of poly-ubiquitin precursors as well as that of ubiquitinated proteins. In Arabidopsis thaliana (Mouse-ear cress), this protein is Ubiquitin carboxyl-terminal hydrolase 5 (UBP5).